The sequence spans 140 residues: uncharacterized protein (140 aa).

It localises to the mitochondrion. This is an uncharacterized protein from Homo sapiens (Human).